We begin with the raw amino-acid sequence, 100 residues long: NADH-quinone oxidoreductase subunit K (100 aa).

A run of 3 helical transmembrane segments spans residues I2–I22, L29–F49, and F63–W83.

The protein belongs to the complex I subunit 4L family. NDH-1 is composed of 14 different subunits. Subunits NuoA, H, J, K, L, M, N constitute the membrane sector of the complex.

It localises to the cell inner membrane. The catalysed reaction is a quinone + NADH + 5 H(+)(in) = a quinol + NAD(+) + 4 H(+)(out). Functionally, NDH-1 shuttles electrons from NADH, via FMN and iron-sulfur (Fe-S) centers, to quinones in the respiratory chain. The immediate electron acceptor for the enzyme in this species is believed to be ubiquinone. Couples the redox reaction to proton translocation (for every two electrons transferred, four hydrogen ions are translocated across the cytoplasmic membrane), and thus conserves the redox energy in a proton gradient. The protein is NADH-quinone oxidoreductase subunit K of Nitratiruptor sp. (strain SB155-2).